The chain runs to 747 residues: ATPase family gene 2 protein homolog B (747 aa).

Methionine 1 bears the N-acetylmethionine mark. Residues 234-241 (GPPGVGKT) and 500-507 (GPPGCAKT) contribute to the ATP site.

Belongs to the AAA ATPase family. AFG2 subfamily. As to quaternary structure, part of the 55LCC heterohexameric ATPase complex composed at least of AIRIM, AFG2A, AFG2B and CINP. Associates with pre-60S ribosomal particles. In adult ear, expressed at low levels in neurosensory hair cells (inner and outer) and supporting cells (pillar and Deiter cells).

Its subcellular location is the cytoplasm. It localises to the cytoskeleton. The protein resides in the spindle. It is found in the nucleus. The enzyme catalyses ATP + H2O = ADP + phosphate + H(+). In the context of 55LCC heterohexameric ATPase complex, the ATPase activity is stimulated by DNA binding and inhibited in presence of RNA. In terms of biological role, ATP-dependent chaperone part of the 55LCC heterohexameric ATPase complex which is chromatin-associated and promotes replisome proteostasis to maintain replication fork progression and genome stability. Required for replication fork progression, sister chromatid cohesion, and chromosome stability. The ATPase activity is specifically enhanced by replication fork DNA and is coupled to cysteine protease-dependent cleavage of replisome substrates in response to replication fork damage. Uses ATPase activity to process replisome substrates in S-phase, facilitating their proteolytic turnover from chromatin to ensure DNA replication and mitotic fidelity. Plays an essential role in the cytoplasmic maturation steps of pre-60S ribosomal particles by promoting the release of shuttling protein RSL24D1/RLP24 from the pre-ribosomal particles. The polypeptide is ATPase family gene 2 protein homolog B (Afg2b) (Mus musculus (Mouse)).